The sequence spans 945 residues: Isoleucine--tRNA ligase (945 aa).

The short motif at 67–77 (PYANGQIHLGH) is the 'HIGH' region element. Glu573 serves as a coordination point for L-isoleucyl-5'-AMP. Residues 614–618 (KMSKS) carry the 'KMSKS' region motif. Lys617 lines the ATP pocket. 4 residues coordinate Zn(2+): Cys908, Cys911, Cys928, and Cys931.

The protein belongs to the class-I aminoacyl-tRNA synthetase family. IleS type 1 subfamily. Monomer. The cofactor is Zn(2+).

The protein resides in the cytoplasm. It catalyses the reaction tRNA(Ile) + L-isoleucine + ATP = L-isoleucyl-tRNA(Ile) + AMP + diphosphate. In terms of biological role, catalyzes the attachment of isoleucine to tRNA(Ile). As IleRS can inadvertently accommodate and process structurally similar amino acids such as valine, to avoid such errors it has two additional distinct tRNA(Ile)-dependent editing activities. One activity is designated as 'pretransfer' editing and involves the hydrolysis of activated Val-AMP. The other activity is designated 'posttransfer' editing and involves deacylation of mischarged Val-tRNA(Ile). The sequence is that of Isoleucine--tRNA ligase from Acinetobacter baylyi (strain ATCC 33305 / BD413 / ADP1).